The chain runs to 447 residues: 2-oxoadipate dioxygenase/decarboxylase (447 aa).

The 2-oxoadipate site is built by His68, Arg72, and His224. Fe(2+) is bound at residue His68. Residues His224 and Glu290 each contribute to the Fe(2+) site. Val391 is a 2-oxoadipate binding site.

It belongs to the 2-oxoadipate dioxygenase/decarboxylase family. Requires Fe(2+) as cofactor.

The catalysed reaction is 2-oxoadipate + O2 = (R)-2-hydroxyglutarate + CO2. Its function is as follows. Catalyzes the decarboxylation and hydroxylation of 2-oxoadipate (2OA) to form D-2-hydroxyglutarate (D-2-HGA). This Shigella flexneri protein is 2-oxoadipate dioxygenase/decarboxylase.